Consider the following 299-residue polypeptide: tRNA dimethylallyltransferase (299 aa).

Position 11–18 (11–18) interacts with ATP; the sequence is GPTAVGKT. Residue 13–18 coordinates substrate; it reads TAVGKT. The tract at residues 36–39 is interaction with substrate tRNA; it reads DSQQ.

It belongs to the IPP transferase family. Monomer. Mg(2+) serves as cofactor.

The enzyme catalyses adenosine(37) in tRNA + dimethylallyl diphosphate = N(6)-dimethylallyladenosine(37) in tRNA + diphosphate. Functionally, catalyzes the transfer of a dimethylallyl group onto the adenine at position 37 in tRNAs that read codons beginning with uridine, leading to the formation of N6-(dimethylallyl)adenosine (i(6)A). This chain is tRNA dimethylallyltransferase, found in Streptococcus pyogenes serotype M6 (strain ATCC BAA-946 / MGAS10394).